The primary structure comprises 160 residues: Cytochrome b6-f complex subunit 4 (160 aa).

A run of 3 helical transmembrane segments spans residues 36–56 (LLYV…ALAV), 95–115 (LLGV…PFIE), and 131–151 (TVFL…ALPL).

It belongs to the cytochrome b family. PetD subfamily. The 4 large subunits of the cytochrome b6-f complex are cytochrome b6, subunit IV (17 kDa polypeptide, PetD), cytochrome f and the Rieske protein, while the 4 small subunits are PetG, PetL, PetM and PetN. The complex functions as a dimer.

The protein localises to the cellular thylakoid membrane. Component of the cytochrome b6-f complex, which mediates electron transfer between photosystem II (PSII) and photosystem I (PSI), cyclic electron flow around PSI, and state transitions. The protein is Cytochrome b6-f complex subunit 4 of Nostoc punctiforme (strain ATCC 29133 / PCC 73102).